A 371-amino-acid chain; its full sequence is 4-hydroxy-3-methylbut-2-en-1-yl diphosphate synthase (flavodoxin) (371 aa).

4 residues coordinate [4Fe-4S] cluster: cysteine 270, cysteine 273, cysteine 305, and glutamate 312.

Belongs to the IspG family. It depends on [4Fe-4S] cluster as a cofactor.

The enzyme catalyses (2E)-4-hydroxy-3-methylbut-2-enyl diphosphate + oxidized [flavodoxin] + H2O + 2 H(+) = 2-C-methyl-D-erythritol 2,4-cyclic diphosphate + reduced [flavodoxin]. Its pathway is isoprenoid biosynthesis; isopentenyl diphosphate biosynthesis via DXP pathway; isopentenyl diphosphate from 1-deoxy-D-xylulose 5-phosphate: step 5/6. Functionally, converts 2C-methyl-D-erythritol 2,4-cyclodiphosphate (ME-2,4cPP) into 1-hydroxy-2-methyl-2-(E)-butenyl 4-diphosphate. This chain is 4-hydroxy-3-methylbut-2-en-1-yl diphosphate synthase (flavodoxin), found in Shewanella sp. (strain W3-18-1).